We begin with the raw amino-acid sequence, 420 residues long: UDP-N-acetylglucosamine 1-carboxyvinyltransferase (420 aa).

Position 22–23 (22–23) interacts with phosphoenolpyruvate; sequence KN. UDP-N-acetyl-alpha-D-glucosamine is bound at residue R94. C118 acts as the Proton donor in catalysis. C118 carries the 2-(S-cysteinyl)pyruvic acid O-phosphothioketal modification. Residues D307 and I329 each contribute to the UDP-N-acetyl-alpha-D-glucosamine site.

This sequence belongs to the EPSP synthase family. MurA subfamily.

The protein resides in the cytoplasm. The enzyme catalyses phosphoenolpyruvate + UDP-N-acetyl-alpha-D-glucosamine = UDP-N-acetyl-3-O-(1-carboxyvinyl)-alpha-D-glucosamine + phosphate. It participates in cell wall biogenesis; peptidoglycan biosynthesis. Functionally, cell wall formation. Adds enolpyruvyl to UDP-N-acetylglucosamine. In Gluconacetobacter diazotrophicus (strain ATCC 49037 / DSM 5601 / CCUG 37298 / CIP 103539 / LMG 7603 / PAl5), this protein is UDP-N-acetylglucosamine 1-carboxyvinyltransferase.